The sequence spans 566 residues: Proline--tRNA ligase (566 aa).

The protein belongs to the class-II aminoacyl-tRNA synthetase family. ProS type 1 subfamily. In terms of assembly, homodimer.

It is found in the cytoplasm. It catalyses the reaction tRNA(Pro) + L-proline + ATP = L-prolyl-tRNA(Pro) + AMP + diphosphate. In terms of biological role, catalyzes the attachment of proline to tRNA(Pro) in a two-step reaction: proline is first activated by ATP to form Pro-AMP and then transferred to the acceptor end of tRNA(Pro). As ProRS can inadvertently accommodate and process non-cognate amino acids such as alanine and cysteine, to avoid such errors it has two additional distinct editing activities against alanine. One activity is designated as 'pretransfer' editing and involves the tRNA(Pro)-independent hydrolysis of activated Ala-AMP. The other activity is designated 'posttransfer' editing and involves deacylation of mischarged Ala-tRNA(Pro). The misacylated Cys-tRNA(Pro) is not edited by ProRS. The chain is Proline--tRNA ligase from Staphylococcus saprophyticus subsp. saprophyticus (strain ATCC 15305 / DSM 20229 / NCIMB 8711 / NCTC 7292 / S-41).